Reading from the N-terminus, the 216-residue chain is Transmembrane emp24 domain-containing protein eca (216 aa).

The first 20 residues, M1 to G20, serve as a signal peptide directing secretion. The Lumenal segment spans residues L21–R183. Positions R30–V126 constitute a GOLD domain. Positions A134 to N164 form a coiled coil. The helical transmembrane segment at V184–M203 threads the bilayer. At R204 to V216 the chain is on the cytoplasmic side. Positions K213–V216 match the Prevents secretion from ER motif.

This sequence belongs to the EMP24/GP25L family.

It localises to the endoplasmic reticulum membrane. Its function is as follows. Eca and bai are essential, though not redundant, for dorsoventral patterning of the embryo. Specifically required during early embryogenesis for the activity of maternal tkv, while the zygotic tkv is not affected. Involved in Golgi organization. This chain is Transmembrane emp24 domain-containing protein eca, found in Drosophila willistoni (Fruit fly).